A 192-amino-acid polypeptide reads, in one-letter code: uncharacterized protein (192 aa).

In terms of domain architecture, Nudix hydrolase spans 29 to 160; sequence HRQAAVLIPI…PLDIYRRGDS (132 aa). Positions 67-89 match the Nudix box motif; the sequence is GAVDDTDASVIAAALREAEEEVA. Mg(2+) is bound by residues Glu-83 and Glu-87.

Belongs to the Nudix hydrolase family. PCD1 subfamily. Mn(2+) is required as a cofactor. The cofactor is Mg(2+).

Functionally, probably mediates the hydrolysis of some nucleoside diphosphate derivatives. This is an uncharacterized protein from Shigella flexneri.